Consider the following 380-residue polypeptide: MKVFRQQLEQLGAQNQYRSIPDLIHQGRYITRENRKMLNMSSNDYLGLASDENLRRSFLQQYGGNFPSFTSSSSRLLTGNFPIYTDLEELVAQRFQRESALLFNSGYHANLGILPALTTTKSLILADKFVHASMIDGIRLSRCAFFRYRHNDYEHLKNLLEKNVGKFDRTFIVTESVFSMDGDVADLKQLVQLKKQFPNTYLYVDEAHAIGVYGQNGLGIAERDNLIAEIDLLVGTFGKALASVGAYAVCNQVLKECLINQMRPLIFSTALPPFNVAWTYFIFERLPQFSKERSHLEQLSAFLRREVAHRTQIMPSETCIVPYILGGNEATLAKAEYLQGQGYYCLPIGPPTVPKNTSRIRLSLTADMTTDEVRQFAACL.

Arg-18 serves as a coordination point for substrate. Position 106–107 (106–107 (GY)) interacts with pyridoxal 5'-phosphate. His-131 is a substrate binding site. Pyridoxal 5'-phosphate is bound by residues Ser-179, 205–208 (DEAH), and 236–239 (TFGK). The residue at position 239 (Lys-239) is an N6-(pyridoxal phosphate)lysine. Position 352 (Thr-352) interacts with substrate.

This sequence belongs to the class-II pyridoxal-phosphate-dependent aminotransferase family. BioF subfamily. In terms of assembly, homodimer. The cofactor is pyridoxal 5'-phosphate.

It carries out the reaction 6-carboxyhexanoyl-[ACP] + L-alanine + H(+) = (8S)-8-amino-7-oxononanoate + holo-[ACP] + CO2. It participates in cofactor biosynthesis; biotin biosynthesis. Catalyzes the decarboxylative condensation of pimeloyl-[acyl-carrier protein] and L-alanine to produce 8-amino-7-oxononanoate (AON), [acyl-carrier protein], and carbon dioxide. This Neisseria gonorrhoeae (strain ATCC 700825 / FA 1090) protein is Putative 8-amino-7-oxononanoate synthase (bioF).